The primary structure comprises 365 residues: 2-aminoethylphosphonate--pyruvate transaminase (365 aa).

The residue at position 194 (Lys-194) is an N6-(pyridoxal phosphate)lysine.

Belongs to the class-V pyridoxal-phosphate-dependent aminotransferase family. PhnW subfamily. In terms of assembly, homodimer. Pyridoxal 5'-phosphate serves as cofactor.

The catalysed reaction is (2-aminoethyl)phosphonate + pyruvate = phosphonoacetaldehyde + L-alanine. Involved in phosphonate degradation. The protein is 2-aminoethylphosphonate--pyruvate transaminase of Bacillus cereus (strain 03BB102).